The sequence spans 200 residues: Adenylate kinase (200 aa).

Position 10–15 (10–15 (GAGKGT)) interacts with ATP. An NMP region spans residues 30-59 (STGDMLRAAVAAETPVGLEAKAIMESGGLV). Residues T31, R36, 57–59 (GLV), 85–88 (GFPR), and Q92 each bind AMP. Positions 126-142 (KRAEETAARGQPVRKDD) are LID. R127 contributes to the ATP binding site. 2 residues coordinate AMP: R139 and R150. Residue K178 coordinates ATP.

The protein belongs to the adenylate kinase family. In terms of assembly, monomer.

It is found in the cytoplasm. It catalyses the reaction AMP + ATP = 2 ADP. It participates in purine metabolism; AMP biosynthesis via salvage pathway; AMP from ADP: step 1/1. Catalyzes the reversible transfer of the terminal phosphate group between ATP and AMP. Plays an important role in cellular energy homeostasis and in adenine nucleotide metabolism. The polypeptide is Adenylate kinase (Methylorubrum extorquens (strain CM4 / NCIMB 13688) (Methylobacterium extorquens)).